Reading from the N-terminus, the 202-residue chain is Recombination protein RecR (202 aa).

Residues 57–72 form a C4-type zinc finger; that stretch reads CGVCRTFTEQPCCDIC. The region spanning 81-176 is the Toprim domain; that stretch reads GQICVVESPS…STTKIAHGVP (96 aa).

It belongs to the RecR family.

Functionally, may play a role in DNA repair. It seems to be involved in an RecBC-independent recombinational process of DNA repair. It may act with RecF and RecO. In Hamiltonella defensa subsp. Acyrthosiphon pisum (strain 5AT), this protein is Recombination protein RecR.